We begin with the raw amino-acid sequence, 120 residues long: Large ribosomal subunit protein uL24 (120 aa).

Residues 1 to 26 are disordered; the sequence is MVRVISSQPRKQRKARYNAPHHMRGS. A compositionally biased stretch (basic residues) spans 10 to 24; the sequence is RKQRKARYNAPHHMR.

The protein belongs to the universal ribosomal protein uL24 family. In terms of assembly, part of the 50S ribosomal subunit.

One of two assembly initiator proteins, it binds directly to the 5'-end of the 23S rRNA, where it nucleates assembly of the 50S subunit. In terms of biological role, located at the polypeptide exit tunnel on the outside of the subunit. This is Large ribosomal subunit protein uL24 from Methanospirillum hungatei JF-1 (strain ATCC 27890 / DSM 864 / NBRC 100397 / JF-1).